Here is a 219-residue protein sequence, read N- to C-terminus: Response regulator ArlR (219 aa).

One can recognise a Response regulatory domain in the interval 3–116; the sequence is NILIVEDEQN…ELLARIRAVL (114 aa). A 4-aspartylphosphate modification is found at D52. Residues 122–219 constitute a DNA-binding region (ompR/PhoB-type); it reads KDVLDINGII…TVRGVGYVIR (98 aa).

In terms of processing, phosphorylated by ArlS.

The protein localises to the cytoplasm. Member of the two-component regulatory system ArlS/ArlR. This chain is Response regulator ArlR (arlR), found in Staphylococcus epidermidis (strain ATCC 12228 / FDA PCI 1200).